Here is a 215-residue protein sequence, read N- to C-terminus: Eukaryotic translation initiation factor 4E (215 aa).

A disordered region spans residues 1 to 27; the sequence is MAERDSEPRVNIIRPDDEPEVEEERVP. Ser-207 carries the post-translational modification Phosphoserine; by PKC.

Belongs to the eukaryotic initiation factor 4E family. As to quaternary structure, eIF4F is a multi-subunit complex, the composition of which varies with external and internal environmental conditions. It is composed of at least eIF4A, eIF4E and eIF4G. eIF4E is also known to interact with other partners. Phosphorylation increases the ability of the protein to bind to mRNA caps and to form the eIF4F complex.

Functionally, recognizes and binds the 7-methylguanosine-containing mRNA cap during an early step in the initiation of protein synthesis and facilitates ribosome binding by inducing the unwinding of the mRNAs secondary structures. This is Eukaryotic translation initiation factor 4E from Aplysia californica (California sea hare).